Here is a 421-residue protein sequence, read N- to C-terminus: UDP-N-acetylglucosamine 1-carboxyvinyltransferase (421 aa).

26-27 (KN) is a binding site for phosphoenolpyruvate. R96 is a UDP-N-acetyl-alpha-D-glucosamine binding site. Residue D120 is the Proton donor of the active site. The UDP-N-acetyl-alpha-D-glucosamine site is built by D308 and V330.

Belongs to the EPSP synthase family. MurA subfamily.

The protein localises to the cytoplasm. It catalyses the reaction phosphoenolpyruvate + UDP-N-acetyl-alpha-D-glucosamine = UDP-N-acetyl-3-O-(1-carboxyvinyl)-alpha-D-glucosamine + phosphate. The protein operates within cell wall biogenesis; peptidoglycan biosynthesis. In terms of biological role, cell wall formation. Adds enolpyruvyl to UDP-N-acetylglucosamine. This Corynebacterium efficiens (strain DSM 44549 / YS-314 / AJ 12310 / JCM 11189 / NBRC 100395) protein is UDP-N-acetylglucosamine 1-carboxyvinyltransferase.